The following is a 146-amino-acid chain: D-aminoacyl-tRNA deacylase (146 aa).

Residues 138-139 (GP) carry the Gly-cisPro motif, important for rejection of L-amino acids motif.

This sequence belongs to the DTD family. In terms of assembly, homodimer.

It localises to the cytoplasm. The catalysed reaction is glycyl-tRNA(Ala) + H2O = tRNA(Ala) + glycine + H(+). It carries out the reaction a D-aminoacyl-tRNA + H2O = a tRNA + a D-alpha-amino acid + H(+). Functionally, an aminoacyl-tRNA editing enzyme that deacylates mischarged D-aminoacyl-tRNAs. Also deacylates mischarged glycyl-tRNA(Ala), protecting cells against glycine mischarging by AlaRS. Acts via tRNA-based rather than protein-based catalysis; rejects L-amino acids rather than detecting D-amino acids in the active site. By recycling D-aminoacyl-tRNA to D-amino acids and free tRNA molecules, this enzyme counteracts the toxicity associated with the formation of D-aminoacyl-tRNA entities in vivo and helps enforce protein L-homochirality. In Stenotrophomonas maltophilia (strain R551-3), this protein is D-aminoacyl-tRNA deacylase.